Consider the following 304-residue polypeptide: N-acetyl-D-glucosamine kinase (304 aa).

ATP is bound by residues 4-11 (GFDMGGTK) and 133-140 (GLGGGLVI). Residues H157, C177, C179, and C184 each contribute to the Zn(2+) site.

It belongs to the ROK (NagC/XylR) family. NagK subfamily.

The catalysed reaction is N-acetyl-D-glucosamine + ATP = N-acetyl-D-glucosamine 6-phosphate + ADP + H(+). It participates in cell wall biogenesis; peptidoglycan recycling. Catalyzes the phosphorylation of N-acetyl-D-glucosamine (GlcNAc) derived from cell-wall degradation, yielding GlcNAc-6-P. This chain is N-acetyl-D-glucosamine kinase, found in Pectobacterium carotovorum subsp. carotovorum (strain PC1).